We begin with the raw amino-acid sequence, 1630 residues long: Transient receptor potential cation channel subfamily M member 1 (1630 aa).

Disordered regions lie at residues M1–K25, P65–K92, A453–E492, L620–I643, and S824–Q858. The Cytoplasmic portion of the chain corresponds to M1–K877. The segment covering S8–K25 has biased composition (low complexity). Polar residues predominate over residues V69–K92. Basic residues predominate over residues G474–K485. 2 stretches are compositionally biased toward basic and acidic residues: residues K825–E834 and G845–H855. A helical membrane pass occupies residues F878–V898. The Extracellular segment spans residues R899–E944. A helical membrane pass occupies residues Y945 to L965. The Cytoplasmic portion of the chain corresponds to Q966–R975. A helical transmembrane segment spans residues V976–N996. Topologically, residues K997–K1008 are extracellular. The chain crosses the membrane as a helical span at residues M1009 to V1029. Topologically, residues A1030–A1107 are cytoplasmic. Residues L1108–F1128 form a helical membrane-spanning segment. Residue N1129 is glycosylated (N-linked (GlcNAc...) asparagine). Topologically, residues N1129–P1158 are extracellular. A helical membrane pass occupies residues V1159–G1179. The Cytoplasmic portion of the chain corresponds to R1180–C1630. Positions I1235 to R1255 form a coiled coil. 2 disordered regions span residues E1362–L1414 and C1575–C1630.

The protein belongs to the transient receptor (TC 1.A.4) family. LTrpC subfamily. TRPM1 sub-subfamily. In terms of assembly, interacts with TRPM3; the interaction results in the formation of a heteromultimeric cation channel complex that are functionally different from the homomeric channels. Interacts with GPR179. Associates with both guanine nucleotide-binding proteins G(o) and beta-gamma G protein dimer; implicated in directly regulating TRPM1 channel open-state.

Its subcellular location is the cell membrane. The protein resides in the endoplasmic reticulum membrane. It localises to the cell projection. The protein localises to the axon. It carries out the reaction Ca(2+)(in) = Ca(2+)(out). The catalysed reaction is Mg(2+)(in) = Mg(2+)(out). It catalyses the reaction Mn(2+)(in) = Mn(2+)(out). The enzyme catalyses Ni(2+)(in) = Ni(2+)(out). Its activity is regulated as follows. Inhibited by extracellular zinc ions. Inhibited by intracellular Mg(2+). Activated by the neuroactive steroid pregnenolone sulfate. Negatively regulated by activation of GRM6 receptors in the ON-bipolar cells. Functionally, constitutively open nonselective divalent cation-conducting channels which mediate the influx of Ca(2+), Mg(2+), Mn(2+), Ba(2+), and Ni(2+) into the cytoplasm, leading to membrane depolarization. Impermeable to zinc ions. In addition, forms heteromultimeric ion channels with TRPM3 which are permeable for calcium and zinc ions. Plays an essential role for the depolarizing photoresponse of retinal ON bipolar cells. In the dark, tonic release of glutamate activates the G-protein coupled receptor for glutamate GRM6, its activation induces the release of G(o) protein and the beta-gamma G protein dimer. Both subunits can interact and inactivate the TRPM1 channel. A light onset, induces decrease in glutamate release and deactivation of GRM6 leading to channel opening and membrane depolarization. May play a role in metastasis suppression. The sequence is that of Transient receptor potential cation channel subfamily M member 1 from Rattus norvegicus (Rat).